Here is a 328-residue protein sequence, read N- to C-terminus: Surface antigen CRP170 (328 aa).

Repeats lie at residues 38-102 (NAPC…CKKC) and 103-167 (NAPC…CKKC).

In Giardia intestinalis (Giardia lamblia), this protein is Surface antigen CRP170.